The primary structure comprises 288 residues: Bifunctional protein FolD (288 aa).

Residues 164–166, Ser193, and Ile234 contribute to the NADP(+) site; that span reads GRS.

This sequence belongs to the tetrahydrofolate dehydrogenase/cyclohydrolase family. Homodimer.

It catalyses the reaction (6R)-5,10-methylene-5,6,7,8-tetrahydrofolate + NADP(+) = (6R)-5,10-methenyltetrahydrofolate + NADPH. The enzyme catalyses (6R)-5,10-methenyltetrahydrofolate + H2O = (6R)-10-formyltetrahydrofolate + H(+). It functions in the pathway one-carbon metabolism; tetrahydrofolate interconversion. In terms of biological role, catalyzes the oxidation of 5,10-methylenetetrahydrofolate to 5,10-methenyltetrahydrofolate and then the hydrolysis of 5,10-methenyltetrahydrofolate to 10-formyltetrahydrofolate. This Nitratidesulfovibrio vulgaris (strain DSM 19637 / Miyazaki F) (Desulfovibrio vulgaris) protein is Bifunctional protein FolD.